A 489-amino-acid chain; its full sequence is MPAMRLHELLARTGLDTRNLPDIDIAGLSTDSRQVQPGDLFIGLPGTRVDGSEFWPQAIAGGAAGLVISENARGVEAAVPVIRVPDVVGTCARLASAYYDFPARKLTLAGVTGTNGKTTTTHLIENLLQAQAPTGLVGTLYSRWPGQSQEARHTTPFALEIQKLLAQMVEAGCQYGVMEVSSHALAQQRVAGCRFEAAVFTNLTQDHLDFHPDMESYFQAKATLFSPEYRSGRAVINADDPWGVRLAAAYDQVWTYSFQPGADIYPEDAVFTPEGIRGTLVTPVGRAAFTSPLVGQFNLANLLAAVGATLALGIDLEAIAAGLSGFGGVPGRMERVSGSDDDIAVIVDYAHTPDGLRKLLEATRPFVRGRLICVFGCGGDRDRTKRPQMGRIAAELSDLPVVTSDNPRTENPEAILDDILAGIPVGVSPTVEVDRRRAILQALLEAKAGDCVVIAGKGHEDYQILGTTKIHFDDREQAREALSKRRSRG.

Position 32 (S32) interacts with UDP-N-acetyl-alpha-D-muramoyl-L-alanyl-D-glutamate. Residue 113-119 participates in ATP binding; it reads GTNGKTT. UDP-N-acetyl-alpha-D-muramoyl-L-alanyl-D-glutamate-binding positions include 154 to 155, S181, Q187, and R189; that span reads TT. K221 is modified (N6-carboxylysine). Residues R381, 405-408, G456, and E460 each bind meso-2,6-diaminopimelate; that span reads DNPR. Residues 405-408 carry the Meso-diaminopimelate recognition motif motif; it reads DNPR.

It belongs to the MurCDEF family. MurE subfamily. Mg(2+) serves as cofactor. Post-translationally, carboxylation is probably crucial for Mg(2+) binding and, consequently, for the gamma-phosphate positioning of ATP.

Its subcellular location is the cytoplasm. It catalyses the reaction UDP-N-acetyl-alpha-D-muramoyl-L-alanyl-D-glutamate + meso-2,6-diaminopimelate + ATP = UDP-N-acetyl-alpha-D-muramoyl-L-alanyl-gamma-D-glutamyl-meso-2,6-diaminopimelate + ADP + phosphate + H(+). It functions in the pathway cell wall biogenesis; peptidoglycan biosynthesis. Functionally, catalyzes the addition of meso-diaminopimelic acid to the nucleotide precursor UDP-N-acetylmuramoyl-L-alanyl-D-glutamate (UMAG) in the biosynthesis of bacterial cell-wall peptidoglycan. This is UDP-N-acetylmuramoyl-L-alanyl-D-glutamate--2,6-diaminopimelate ligase from Gloeobacter violaceus (strain ATCC 29082 / PCC 7421).